A 209-amino-acid polypeptide reads, in one-letter code: Rac-like GTP-binding protein ARAC7 (209 aa).

13–20 is a GTP binding site; that stretch reads GDGAVGKT. Residues 35 to 43 carry the Effector region motif; the sequence is YIPTVFDNF. GTP contacts are provided by residues 60 to 64 and 118 to 121; these read DTAGQ and TKLD. 3 S-palmitoyl cysteine lipidation sites follow: Cys-196, Cys-203, and Cys-206.

The protein belongs to the small GTPase superfamily. Rho family. Although this sequence has a C-terminal -CXXX, it is palmitoylated at Cys-206, rather than prenylated.

It is found in the membrane. In terms of biological role, acts as a negative regulator of abscisic acid (ABA) responses. This is Rac-like GTP-binding protein ARAC7 (ARAC7) from Arabidopsis thaliana (Mouse-ear cress).